The following is a 150-amino-acid chain: Protein ORF35 (150 aa).

In Homo sapiens (Human), this protein is Protein ORF35 (ORF35).